We begin with the raw amino-acid sequence, 1123 residues long: Nicotinic receptor-associated protein 4 (1123 aa).

An N-terminal signal peptide occupies residues 1–18 (MGSLPLILLSLLLPGALA). Topologically, residues 19 to 1071 (NVYSCAGSVK…TSSKRANDVD (1053 aa)) are lumenal. A helical transmembrane segment spans residues 1072 to 1092 (ISVGTFLSLPFFVTLALVFFN). Topologically, residues 1093-1123 (QNRVLELLGTFIDWARNTFAPTADNHHRKRK) are cytoplasmic.

In terms of assembly, may interact with nra-2 in the ER. In terms of tissue distribution, expressed in body wall, pharyngeal, uterine and vulval muscles, motor neurons, nerve ring, motor and ventral cord neurons, hypodermal cells in the tail, vulval epithelium and intestine.

The protein localises to the endoplasmic reticulum membrane. Its function is as follows. Involved in the recognition and selection of protein complexes to exit the endoplasmic reticulum (ER). In muscles, regulates levamisole-sensitive nicotinic acetylcholine receptor (L-AChR) subunit composition, possibly by allowing only specific L-AChR subunit combinations to exit the ER. Specifically, may promote the inclusion of alpha subunit unc-38 into and the exclusion of unc-29 from L-AChR. Regulates L-AChR sensitivity to agonists such as nicotine and levamisole at neuro-muscular junctions. This chain is Nicotinic receptor-associated protein 4, found in Caenorhabditis elegans.